The sequence spans 328 residues: Cell cycle control protein 50A (328 aa).

Residues 1-28 (MAMNYSAKDEVDGGPTGPPGGAAKTRRP) are disordered. A2 is modified (N-acetylalanine). The interval 2-48 (AMNYSAKDEVDGGPTGPPGGAAKTRRPDNTAFKQQRLPAWQPILTAG) is required for ATPase and aminophospholipid flippase activity. The Cytoplasmic portion of the chain corresponds to 2–49 (AMNYSAKDEVDGGPTGPPGGAAKTRRPDNTAFKQQRLPAWQPILTAGT). The tract at residues 49-315 (TVLPTFFIIG…LGVVLLVINH (267 aa)) is interaction with ATP8A2. The helical transmembrane segment at 50–70 (VLPTFFIIGLIFIPIGIGIFV) threads the bilayer. The Exoplasmic loop portion of the chain corresponds to 71 to 292 (TSNNIREIEG…SWMGGKNPFL (222 aa)). A disordered region spans residues 102 to 125 (RDDSQLNGDPSALLNPSKECEPYR). Residues C121 and C135 are joined by a disulfide bond. N-linked (GlcNAc...) asparagine glycosylation is found at N144 and N261. A helical transmembrane segment spans residues 293 to 313 (GIAYITIGSISFLLGVVLLVI). Topologically, residues 314–328 (NHKYRNSSNTADITI) are cytoplasmic.

It belongs to the CDC50/LEM3 family. As to quaternary structure, component of various P4-ATPase flippase complexes which consists of a catalytic alpha subunit and an accessory beta subunit. Interacts with ATP8A1 to form a flippase complex; this complex forms an intermediate phosphoenzyme. Interacts with ATP8A2 to form a flippase complex. TP8B1:TMEM30A and ATP8B2:TMEM30A flippase complexes have been shown to form intermediate phosphoenzymes in vitro. Interacts with alpha subunits ATP8A1, ATP8B1, ATP8B2, ATP8B4, ATP10A, ATP10B, ATP10D, ATP11A, ATP11B and ATP11C. N-glycosylated. Contains high mannose-type oligosaccharides.

The protein resides in the membrane. The protein localises to the golgi apparatus. Its subcellular location is the cytoplasmic vesicle. It is found in the secretory vesicle membrane. It localises to the apical cell membrane. The protein resides in the photoreceptor inner segment. The protein localises to the cell projection. Its subcellular location is the cilium. It is found in the photoreceptor outer segment. Accessory component of a P4-ATPase flippase complex which catalyzes the hydrolysis of ATP coupled to the transport of aminophospholipids from the outer to the inner leaflet of various membranes and ensures the maintenance of asymmetric distribution of phospholipids. Phospholipid translocation also seems to be implicated in vesicle formation and in uptake of lipid signaling molecules. The beta subunit may assist in binding of the phospholipid substrate. Required for the proper folding, assembly and ER to Golgi exit of the ATP8A2:TMEM30A flippase complex. ATP8A2:TMEM30A may be involved in regulation of neurite outgrowth, and, reconstituted to liposomes, predomiminantly transports phosphatidylserine (PS) and to a lesser extent phosphatidylethanolamine (PE). The ATP8A1:TMEM30A flippase complex seems to play a role in regulation of cell migration probably involving flippase-mediated translocation of phosphatidylethanolamine (PE) at the plasma membrane. Required for the formation of the ATP8A2, ATP8B1 and ATP8B2 P-type ATPAse intermediate phosphoenzymes. Involved in uptake of platelet-activating factor (PAF). Can also mediate the export of alpha subunits ATP8A1, ATP8B1, ATP8B2, ATP8B4, ATP10A, ATP10B, ATP10D, ATP11A, ATP11B and ATP11C from ER to other membrane localizations. The chain is Cell cycle control protein 50A from Rattus norvegicus (Rat).